A 282-amino-acid polypeptide reads, in one-letter code: Pantothenate synthetase (282 aa).

Position 30 to 37 (30 to 37) interacts with ATP; it reads MGYLHQGH. The active-site Proton donor is histidine 37. Glutamine 61 provides a ligand contact to (R)-pantoate. Glutamine 61 contributes to the beta-alanine binding site. 147–150 is a binding site for ATP; sequence GQKD. Glutamine 153 provides a ligand contact to (R)-pantoate. Residues valine 176 and 184-187 each bind ATP; that span reads MSSR.

Belongs to the pantothenate synthetase family. In terms of assembly, homodimer.

The protein resides in the cytoplasm. It catalyses the reaction (R)-pantoate + beta-alanine + ATP = (R)-pantothenate + AMP + diphosphate + H(+). It functions in the pathway cofactor biosynthesis; (R)-pantothenate biosynthesis; (R)-pantothenate from (R)-pantoate and beta-alanine: step 1/1. Functionally, catalyzes the condensation of pantoate with beta-alanine in an ATP-dependent reaction via a pantoyl-adenylate intermediate. This is Pantothenate synthetase from Geotalea daltonii (strain DSM 22248 / JCM 15807 / FRC-32) (Geobacter daltonii).